The chain runs to 123 residues: Large ribosomal subunit protein uL14 (123 aa).

It belongs to the universal ribosomal protein uL14 family. Part of the 50S ribosomal subunit. Forms a cluster with proteins L3 and L19. In the 70S ribosome, L14 and L19 interact and together make contacts with the 16S rRNA in bridges B5 and B8.

In terms of biological role, binds to 23S rRNA. Forms part of two intersubunit bridges in the 70S ribosome. The polypeptide is Large ribosomal subunit protein uL14 (Actinobacillus succinogenes (strain ATCC 55618 / DSM 22257 / CCUG 43843 / 130Z)).